A 353-amino-acid polypeptide reads, in one-letter code: Histidine biosynthesis bifunctional protein HisB (353 aa).

Residues 1–164 (MKNKILFIDR…HITKYIIKHN (164 aa)) are histidinol-phosphatase. Catalysis depends on D9, which acts as the Nucleophile. The Mg(2+) site is built by D9 and D11. D11 (proton donor) is an active-site residue. 4 residues coordinate Zn(2+): C93, H95, C101, and C103. Residue D128 coordinates Mg(2+). The segment at 165–353 (RYAEIIRRTK…NMLPTSKGIL (189 aa)) is imidazoleglycerol-phosphate dehydratase.

In the N-terminal section; belongs to the histidinol-phosphatase family. The protein in the C-terminal section; belongs to the imidazoleglycerol-phosphate dehydratase family. The cofactor is Mg(2+). Requires Zn(2+) as cofactor.

Its subcellular location is the cytoplasm. It carries out the reaction D-erythro-1-(imidazol-4-yl)glycerol 3-phosphate = 3-(imidazol-4-yl)-2-oxopropyl phosphate + H2O. The enzyme catalyses L-histidinol phosphate + H2O = L-histidinol + phosphate. The protein operates within amino-acid biosynthesis; L-histidine biosynthesis; L-histidine from 5-phospho-alpha-D-ribose 1-diphosphate: step 6/9. It functions in the pathway amino-acid biosynthesis; L-histidine biosynthesis; L-histidine from 5-phospho-alpha-D-ribose 1-diphosphate: step 8/9. This is Histidine biosynthesis bifunctional protein HisB from Buchnera aphidicola subsp. Acyrthosiphon pisum (strain Tuc7).